A 255-amino-acid polypeptide reads, in one-letter code: Indole-3-glycerol phosphate synthase (255 aa).

It belongs to the TrpC family.

It carries out the reaction 1-(2-carboxyphenylamino)-1-deoxy-D-ribulose 5-phosphate + H(+) = (1S,2R)-1-C-(indol-3-yl)glycerol 3-phosphate + CO2 + H2O. It participates in amino-acid biosynthesis; L-tryptophan biosynthesis; L-tryptophan from chorismate: step 4/5. The sequence is that of Indole-3-glycerol phosphate synthase from Streptococcus mutans serotype c (strain ATCC 700610 / UA159).